The chain runs to 71 residues: Vitellogenin-B1 (71 aa).

A signal peptide spans 1 to 15 (MRGIILAQLLALAGS). The Vitellogenin domain maps to 24 to 71 (FSESKPYVYNYEGIILNGIPENGLARSGIKLNCKAEISGYAQRSYMLK).

In terms of tissue distribution, produced by the liver, secreted into the blood and then sequestered by receptor mediated endocytosis into growing oocytes, where it is generally cleaved, giving rise to the respective yolk components.

In terms of biological role, precursor of the major egg-yolk proteins that are sources of nutrients during early development of oviparous organisms. This Xenopus laevis (African clawed frog) protein is Vitellogenin-B1.